The primary structure comprises 364 residues: Fructose-1,6-bisphosphatase class 1 1 (364 aa).

Residues Glu99, Asp121, Leu123, and Asp124 each coordinate Mg(2+). Residues 124–127 and Asn220 contribute to the substrate site; that span reads DGSS. Glu292 lines the Mg(2+) pocket.

The protein belongs to the FBPase class 1 family. In terms of assembly, homotetramer. The cofactor is Mg(2+).

Its subcellular location is the cytoplasm. It carries out the reaction beta-D-fructose 1,6-bisphosphate + H2O = beta-D-fructose 6-phosphate + phosphate. The protein operates within carbohydrate biosynthesis; gluconeogenesis. The sequence is that of Fructose-1,6-bisphosphatase class 1 1 from Albidiferax ferrireducens (strain ATCC BAA-621 / DSM 15236 / T118) (Rhodoferax ferrireducens).